The following is a 411-amino-acid chain: 4-coumarate--CoA ligase (411 aa).

This sequence belongs to the ATP-dependent AMP-binding enzyme family.

It catalyses the reaction (E)-4-coumarate + ATP + CoA = (E)-4-coumaroyl-CoA + AMP + diphosphate. Its function is as follows. Converts p-coumaric acid into p-coumaryl CoA. This is necessary for the activation of the photoactive yellow protein (PYP) chromophore. In Cereibacter sphaeroides (strain ATCC 17023 / DSM 158 / JCM 6121 / CCUG 31486 / LMG 2827 / NBRC 12203 / NCIMB 8253 / ATH 2.4.1.) (Rhodobacter sphaeroides), this protein is 4-coumarate--CoA ligase (pcl).